We begin with the raw amino-acid sequence, 300 residues long: GTPase Era (300 aa).

An Era-type G domain is found at 4–173 (KYGIVAIVGK…INTIKQYLHK (170 aa)). Positions 12 to 19 (GKPNVGKS) are G1. 12-19 (GKPNVGKS) lines the GTP pocket. Residues 38–42 (QTTRN) are G2. The G3 stretch occupies residues 59–62 (DTPG). Residues 59 to 63 (DTPGF) and 122 to 125 (SKAE) contribute to the GTP site. Residues 122–125 (SKAE) form a G4 region. The segment at 152–154 (ISA) is G5. The KH type-2 domain occupies 204–282 (LNHEVPHGVG…SLTIFVKVEN (79 aa)).

The protein belongs to the TRAFAC class TrmE-Era-EngA-EngB-Septin-like GTPase superfamily. Era GTPase family. In terms of assembly, monomer.

It localises to the cytoplasm. Its subcellular location is the cell membrane. An essential GTPase that binds both GDP and GTP, with rapid nucleotide exchange. Plays a role in 16S rRNA processing and 30S ribosomal subunit biogenesis and possibly also in cell cycle regulation and energy metabolism. In Ureaplasma urealyticum serovar 10 (strain ATCC 33699 / Western), this protein is GTPase Era.